The primary structure comprises 175 residues: Large ribosomal subunit protein uL10 (175 aa).

It belongs to the universal ribosomal protein uL10 family. In terms of assembly, part of the ribosomal stalk of the 50S ribosomal subunit. The N-terminus interacts with L11 and the large rRNA to form the base of the stalk. The C-terminus forms an elongated spine to which L12 dimers bind in a sequential fashion forming a multimeric L10(L12)X complex.

Forms part of the ribosomal stalk, playing a central role in the interaction of the ribosome with GTP-bound translation factors. This chain is Large ribosomal subunit protein uL10, found in Alkalilimnicola ehrlichii (strain ATCC BAA-1101 / DSM 17681 / MLHE-1).